A 111-amino-acid chain; its full sequence is Large ribosomal subunit protein P1 (111 aa).

Residues 65 to 89 (SGAGSGPAPAAAAAAPAAGGAAPAA) are compositionally biased toward low complexity. The tract at residues 65 to 111 (SGAGSGPAPAAAAAAPAAGGAAPAAETKKKEEPKEESDDDMGFGLFD) is disordered.

This sequence belongs to the eukaryotic ribosomal protein P1/P2 family. P1 and P2 exist as dimers at the large ribosomal subunit.

Plays an important role in the elongation step of protein synthesis. The polypeptide is Large ribosomal subunit protein P1 (Caenorhabditis elegans).